The chain runs to 82 residues: Protein Rv1078A (82 aa).

The segment covering 35 to 54 (GGPTRRLRRRPAVTRRRRPD) has biased composition (basic residues). Residues 35–82 (GGPTRRLRRRPAVTRRRRPDRRFVRCRPSPTRRGLPGCWRHSSTGPHT) are disordered.

The protein localises to the cytoplasm. The protein is Protein Rv1078A of Mycobacterium tuberculosis (strain ATCC 25618 / H37Rv).